The sequence spans 235 residues: NAD(P)H-hydrate epimerase (235 aa).

The region spanning alanine 18 to methionine 221 is the YjeF N-terminal domain. Position 65 to 69 (asparagine 65 to aspartate 69) interacts with (6S)-NADPHX. K(+) contacts are provided by asparagine 66 and aspartate 127. (6S)-NADPHX is bound by residues glycine 131 to proline 137 and aspartate 160. Residue serine 163 participates in K(+) binding.

The protein belongs to the NnrE/AIBP family. Requires K(+) as cofactor.

The enzyme catalyses (6R)-NADHX = (6S)-NADHX. The catalysed reaction is (6R)-NADPHX = (6S)-NADPHX. Its function is as follows. Catalyzes the epimerization of the S- and R-forms of NAD(P)HX, a damaged form of NAD(P)H that is a result of enzymatic or heat-dependent hydration. This is a prerequisite for the S-specific NAD(P)H-hydrate dehydratase to allow the repair of both epimers of NAD(P)HX. This chain is NAD(P)H-hydrate epimerase, found in Caenorhabditis briggsae.